Consider the following 665-residue polypeptide: Glycine--tRNA ligase beta subunit (665 aa).

Belongs to the class-II aminoacyl-tRNA synthetase family. As to quaternary structure, tetramer of two alpha and two beta subunits.

It localises to the cytoplasm. The catalysed reaction is tRNA(Gly) + glycine + ATP = glycyl-tRNA(Gly) + AMP + diphosphate. This chain is Glycine--tRNA ligase beta subunit (glyS), found in Rickettsia prowazekii (strain Madrid E).